The chain runs to 233 residues: Uracil-DNA glycosylase (233 aa).

Catalysis depends on Asp70, which acts as the Proton acceptor.

Belongs to the uracil-DNA glycosylase (UDG) superfamily. UNG family.

Its subcellular location is the cytoplasm. It catalyses the reaction Hydrolyzes single-stranded DNA or mismatched double-stranded DNA and polynucleotides, releasing free uracil.. In terms of biological role, excises uracil residues from the DNA which can arise as a result of misincorporation of dUMP residues by DNA polymerase or due to deamination of cytosine. In Helicobacter pylori (strain P12), this protein is Uracil-DNA glycosylase.